A 305-amino-acid chain; its full sequence is Probable 5-dehydro-4-deoxyglucarate dehydratase (305 aa).

This sequence belongs to the DapA family.

It carries out the reaction 5-dehydro-4-deoxy-D-glucarate + H(+) = 2,5-dioxopentanoate + CO2 + H2O. The protein operates within carbohydrate acid metabolism; D-glucarate degradation; 2,5-dioxopentanoate from D-glucarate: step 2/2. The protein is Probable 5-dehydro-4-deoxyglucarate dehydratase of Pseudomonas entomophila (strain L48).